Reading from the N-terminus, the 393-residue chain is NAD(P)H-quinone oxidoreductase subunit H, chloroplastic (393 aa).

Belongs to the complex I 49 kDa subunit family. In terms of assembly, NDH is composed of at least 16 different subunits, 5 of which are encoded in the nucleus.

It localises to the plastid. Its subcellular location is the chloroplast thylakoid membrane. The catalysed reaction is a plastoquinone + NADH + (n+1) H(+)(in) = a plastoquinol + NAD(+) + n H(+)(out). It catalyses the reaction a plastoquinone + NADPH + (n+1) H(+)(in) = a plastoquinol + NADP(+) + n H(+)(out). In terms of biological role, NDH shuttles electrons from NAD(P)H:plastoquinone, via FMN and iron-sulfur (Fe-S) centers, to quinones in the photosynthetic chain and possibly in a chloroplast respiratory chain. The immediate electron acceptor for the enzyme in this species is believed to be plastoquinone. Couples the redox reaction to proton translocation, and thus conserves the redox energy in a proton gradient. This chain is NAD(P)H-quinone oxidoreductase subunit H, chloroplastic, found in Ceratophyllum demersum (Rigid hornwort).